The sequence spans 304 residues: Triplex capsid protein 2 (304 aa).

This sequence belongs to the herpesviridae TRX2 protein family. Interacts with TRX1 and major capisd protein/MCP.

The protein localises to the virion. The protein resides in the host nucleus. Its function is as follows. Structural component of the T=16 icosahedral capsid. The capsid is composed of pentamers and hexamers of major capsid protein/MCP, which are linked together by heterotrimers called triplexes. These triplexes are formed by a single molecule of triplex protein 1/TRX1 and two copies of triplex protein 2/TRX2. Additionally, TRX1 is required for efficient transport of TRX2 to the nucleus, which is the site of capsid assembly. This chain is Triplex capsid protein 2, found in Saimiri sciureus (Common squirrel monkey).